We begin with the raw amino-acid sequence, 273 residues long: Putative carboxypeptidase YodJ (273 aa).

A signal peptide spans 1–23 (MKKSGKWFSLAAALSVTAIVGAG). The N-palmitoyl cysteine moiety is linked to residue Cys24. A lipid anchor (S-diacylglycerol cysteine) is attached at Cys24. A disordered region spans residues 27-58 (SNGDAQKDTKTTAETKQTEQKTADSKKSNTQN). Residues 31–53 (AQKDTKTTAETKQTEQKTADSKK) are compositionally biased toward basic and acidic residues.

It belongs to the peptidase M15B family.

The protein localises to the cell membrane. In Bacillus subtilis (strain 168), this protein is Putative carboxypeptidase YodJ (yodJ).